The following is a 73-amino-acid chain: MKAGIHPEYHTIKVVMTDGTEYETRSTWGSEGATMHLEIDSKSHPAWTGGNQQLVDRGGRVSKFKKRFEGLGL.

This sequence belongs to the bacterial ribosomal protein bL31 family. Type A subfamily. In terms of assembly, part of the 50S ribosomal subunit.

In terms of biological role, binds the 23S rRNA. This Sinorhizobium fredii (strain NBRC 101917 / NGR234) protein is Large ribosomal subunit protein bL31.